Here is a 204-residue protein sequence, read N- to C-terminus: CASP-like protein 2A1 (204 aa).

Positions 1-11 (MEKSNDHDKAS) are enriched in basic and acidic residues. Positions 1-25 (MEKSNDHDKASHGGSGGGATEKWEE) are disordered. At 1–32 (MEKSNDHDKASHGGSGGGATEKWEETSPGIRT) the chain is on the cytoplasmic side. A helical transmembrane segment spans residues 33 to 53 (AETMLRLAPVGLCVAALVVML). The Extracellular segment spans residues 54–74 (KDSETNEFGSISYSNLTAFRY). Residue asparagine 68 is glycosylated (N-linked (GlcNAc...) asparagine). A helical transmembrane segment spans residues 75-95 (LVHANGICAGYSLLSAAIAAM). Topologically, residues 96 to 113 (PRSSSTMPRVWTFFCLDQ) are cytoplasmic. The helical transmembrane segment at 114-134 (LLTYLVLAAGAVSAEVLYLAY) threads the bilayer. The Extracellular segment spans residues 135–155 (NGDSAITWSDACSSYGGFCHR). Residues 156-176 (ATASVIITFFVVCFYILLSLI) traverse the membrane as a helical segment. Residues 177-204 (SSYKLFTRFDPPSIVDSDKTLEVAVFGS) are Cytoplasmic-facing.

Belongs to the Casparian strip membrane proteins (CASP) family. Homodimer and heterodimers.

It is found in the cell membrane. The polypeptide is CASP-like protein 2A1 (Arabidopsis lyrata subsp. lyrata (Lyre-leaved rock-cress)).